The sequence spans 432 residues: Trigger factor (432 aa).

In terms of domain architecture, PPIase FKBP-type spans 163-248; the sequence is GDIAVIDFEG…LKALNKKELP (86 aa).

It belongs to the FKBP-type PPIase family. Tig subfamily.

It localises to the cytoplasm. It carries out the reaction [protein]-peptidylproline (omega=180) = [protein]-peptidylproline (omega=0). Functionally, involved in protein export. Acts as a chaperone by maintaining the newly synthesized protein in an open conformation. Functions as a peptidyl-prolyl cis-trans isomerase. The polypeptide is Trigger factor (Caldanaerobacter subterraneus subsp. tengcongensis (strain DSM 15242 / JCM 11007 / NBRC 100824 / MB4) (Thermoanaerobacter tengcongensis)).